The chain runs to 427 residues: Glutamate-1-semialdehyde 2,1-aminomutase (427 aa).

Lysine 265 is subject to N6-(pyridoxal phosphate)lysine.

It belongs to the class-III pyridoxal-phosphate-dependent aminotransferase family. HemL subfamily. Homodimer. It depends on pyridoxal 5'-phosphate as a cofactor.

The protein localises to the cytoplasm. It catalyses the reaction (S)-4-amino-5-oxopentanoate = 5-aminolevulinate. Its pathway is porphyrin-containing compound metabolism; protoporphyrin-IX biosynthesis; 5-aminolevulinate from L-glutamyl-tRNA(Glu): step 2/2. This Pseudomonas savastanoi pv. phaseolicola (strain 1448A / Race 6) (Pseudomonas syringae pv. phaseolicola (strain 1448A / Race 6)) protein is Glutamate-1-semialdehyde 2,1-aminomutase.